Reading from the N-terminus, the 362-residue chain is Aminomethyltransferase (362 aa).

Belongs to the GcvT family. In terms of assembly, the glycine cleavage system is composed of four proteins: P, T, L and H.

The catalysed reaction is N(6)-[(R)-S(8)-aminomethyldihydrolipoyl]-L-lysyl-[protein] + (6S)-5,6,7,8-tetrahydrofolate = N(6)-[(R)-dihydrolipoyl]-L-lysyl-[protein] + (6R)-5,10-methylene-5,6,7,8-tetrahydrofolate + NH4(+). Functionally, the glycine cleavage system catalyzes the degradation of glycine. The polypeptide is Aminomethyltransferase (Chlorobium limicola (strain DSM 245 / NBRC 103803 / 6330)).